Reading from the N-terminus, the 614-residue chain is Putative binding protein BMEII0691 (614 aa).

The signal sequence occupies residues 1–28; that stretch reads MNRFIAFFRSVFLIGLVATAFGALPARA.

It belongs to the bacterial solute-binding protein 5 family.

It localises to the periplasm. The protein is Putative binding protein BMEII0691 of Brucella melitensis biotype 1 (strain ATCC 23456 / CCUG 17765 / NCTC 10094 / 16M).